The chain runs to 123 residues: Small ribosomal subunit protein uS12 (123 aa).

A disordered region spans residues 1 to 26 (MPTINQLVRKPRKSRSSLNKAPALQH). Asp90 carries the post-translational modification 3-methylthioaspartic acid.

This sequence belongs to the universal ribosomal protein uS12 family. In terms of assembly, part of the 30S ribosomal subunit. Contacts proteins S8 and S17. May interact with IF1 in the 30S initiation complex.

In terms of biological role, with S4 and S5 plays an important role in translational accuracy. Interacts with and stabilizes bases of the 16S rRNA that are involved in tRNA selection in the A site and with the mRNA backbone. Located at the interface of the 30S and 50S subunits, it traverses the body of the 30S subunit contacting proteins on the other side and probably holding the rRNA structure together. The combined cluster of proteins S8, S12 and S17 appears to hold together the shoulder and platform of the 30S subunit. The polypeptide is Small ribosomal subunit protein uS12 (Ehrlichia chaffeensis (strain ATCC CRL-10679 / Arkansas)).